A 160-amino-acid chain; its full sequence is MTNTPSDQPLKQVNQRGAARLAAVQALYQMDVGGTGVLEIVAEYEEHRLGKELDGDTYLRADASWFRSIVAGVVRDQRKLDPLIGSALQDDWALSRLDSTVRAILRAGTFEILERKDVPVPVIVTEYVEIAKAFFQDEEPKLVNAVLDRIAKQVRGEQRK.

It belongs to the NusB family.

Its function is as follows. Involved in transcription antitermination. Required for transcription of ribosomal RNA (rRNA) genes. Binds specifically to the boxA antiterminator sequence of the ribosomal RNA (rrn) operons. The sequence is that of Transcription antitermination protein NusB from Sinorhizobium medicae (strain WSM419) (Ensifer medicae).